We begin with the raw amino-acid sequence, 368 residues long: Nuclease EXOG, mitochondrial (368 aa).

The N-terminal 41 residues, 1-41 (MAAKSFASRLRDSRRFLNGFLAGAVVGAAGAGLTALQFFRR), are a transit peptide targeting the mitochondrion. His140 acts as the Proton acceptor in catalysis. Asn171 serves as a coordination point for a divalent metal cation.

The protein belongs to the DNA/RNA non-specific endonuclease family. Homodimer. The cofactor is a divalent metal cation.

The protein localises to the mitochondrion inner membrane. In terms of biological role, endo/exonuclease with nicking activity towards supercoiled DNA, a preference for single-stranded DNA and 5'-3' exonuclease activity. The sequence is that of Nuclease EXOG, mitochondrial (Exog) from Mus musculus (Mouse).